We begin with the raw amino-acid sequence, 336 residues long: Heme A synthase (336 aa).

8 helical membrane passes run 12–32 (LKLW…VGGL), 97–117 (LLAR…TLYF), 130–150 (IFFL…SGLI), 161–181 (SIHL…ILDI), 194–214 (LFLL…AFLS), 256–276 (FLHR…NFIY), 285–305 (YVLF…ITLI), and 310–330 (ITYA…YFLI). His258 provides a ligand contact to heme. His316 is a heme binding site.

Belongs to the COX15/CtaA family. Type 2 subfamily. Interacts with CtaB. Heme b is required as a cofactor.

The protein localises to the cell membrane. It catalyses the reaction Fe(II)-heme o + 2 A + H2O = Fe(II)-heme a + 2 AH2. It functions in the pathway porphyrin-containing compound metabolism; heme A biosynthesis; heme A from heme O: step 1/1. In terms of biological role, catalyzes the conversion of heme O to heme A by two successive hydroxylations of the methyl group at C8. The first hydroxylation forms heme I, the second hydroxylation results in an unstable dihydroxymethyl group, which spontaneously dehydrates, resulting in the formyl group of heme A. The sequence is that of Heme A synthase from Pelagibacter ubique (strain HTCC1062).